The primary structure comprises 696 residues: Gametogenetin-binding protein 2 (696 aa).

S360 is modified (phosphoserine).

Interacts with GGN.

It is found in the cytoplasmic vesicle. Its function is as follows. May be involved in spermatogenesis. The protein is Gametogenetin-binding protein 2 (Ggnbp2) of Rattus norvegicus (Rat).